Reading from the N-terminus, the 179-residue chain is Large ribosomal subunit protein uL6 (179 aa).

Belongs to the universal ribosomal protein uL6 family. As to quaternary structure, part of the 50S ribosomal subunit.

In terms of biological role, this protein binds to the 23S rRNA, and is important in its secondary structure. It is located near the subunit interface in the base of the L7/L12 stalk, and near the tRNA binding site of the peptidyltransferase center. This chain is Large ribosomal subunit protein uL6, found in Synechococcus sp. (strain WH7803).